The following is a 291-amino-acid chain: tRNA U34 carboxymethyltransferase (291 aa).

Residues Lys61, Trp75, Lys80, Gly100, 122–124 (DPS), 149–150 (VE), Tyr169, and Arg284 contribute to the carboxy-S-adenosyl-L-methionine site.

It belongs to the class I-like SAM-binding methyltransferase superfamily. CmoB family. Homotetramer.

It carries out the reaction carboxy-S-adenosyl-L-methionine + 5-hydroxyuridine(34) in tRNA = 5-carboxymethoxyuridine(34) in tRNA + S-adenosyl-L-homocysteine + H(+). Functionally, catalyzes carboxymethyl transfer from carboxy-S-adenosyl-L-methionine (Cx-SAM) to 5-hydroxyuridine (ho5U) to form 5-carboxymethoxyuridine (cmo5U) at position 34 in tRNAs. The chain is tRNA U34 carboxymethyltransferase from Campylobacter jejuni (strain RM1221).